We begin with the raw amino-acid sequence, 319 residues long: tRNA pseudouridine synthase B (319 aa).

The active-site Nucleophile is aspartate 49.

The protein belongs to the pseudouridine synthase TruB family. Type 1 subfamily.

It carries out the reaction uridine(55) in tRNA = pseudouridine(55) in tRNA. In terms of biological role, responsible for synthesis of pseudouridine from uracil-55 in the psi GC loop of transfer RNAs. The chain is tRNA pseudouridine synthase B from Bartonella henselae (strain ATCC 49882 / DSM 28221 / CCUG 30454 / Houston 1) (Rochalimaea henselae).